Reading from the N-terminus, the 375-residue chain is Cinnamyl alcohol dehydrogenase 3 (375 aa).

Cys-44 contributes to the Zn(2+) binding site. Ser-46 lines the NADP(+) pocket. His-66, Glu-67, Cys-97, Cys-100, Cys-103, Cys-111, and Cys-160 together coordinate Zn(2+). NADP(+) contacts are provided by residues Thr-164, 186–191, 209–214, Thr-249, Gly-273, and 296–298; these read GLGGLG, SRSSEK, and SQI.

Belongs to the zinc-containing alcohol dehydrogenase family. In terms of assembly, homodimer. It depends on Zn(2+) as a cofactor. Expressed in the root tips. Expressed in the apical meristematic regions, leaf veins and at the base of the trichomes. Expressed at the base of the stems. Expressed in the abscission zones of newly formed siliques.

The catalysed reaction is (E)-cinnamyl alcohol + NADP(+) = (E)-cinnamaldehyde + NADPH + H(+). It carries out the reaction (E)-coniferol + NADP(+) = (E)-coniferaldehyde + NADPH + H(+). The enzyme catalyses (E)-sinapyl alcohol + NADP(+) = (E)-sinapaldehyde + NADPH + H(+). It catalyses the reaction (E)-4-coumaroyl alcohol + NADP(+) = (E)-4-coumaraldehyde + NADPH + H(+). The catalysed reaction is (E)-caffeyl alcohol + NADP(+) = (E)-caffeyl aldehyde + NADPH + H(+). The protein operates within aromatic compound metabolism; phenylpropanoid biosynthesis. In terms of biological role, involved in lignin biosynthesis. Catalyzes the final step specific for the production of lignin monomers. Catalyzes the NADPH-dependent reduction of coniferaldehyde, 5-hydroxyconiferaldehyde, sinapaldehyde, 4-coumaraldehyde and caffeyl aldehyde to their respective alcohols. This Arabidopsis thaliana (Mouse-ear cress) protein is Cinnamyl alcohol dehydrogenase 3.